The primary structure comprises 260 residues: ProSAAS (260 aa).

An N-terminal signal peptide occupies residues 1–33 (MAGSPLLWGPRAGGVGLLVLLLLGLFRPPPALC). A proSAAS(1-180) region spans residues 34–215 (ARPVKEPRGL…SADSEGVAAP (182 aa)). The O-linked (GalNAc...) threonine glycan is linked to threonine 53. Positions 165 to 188 (RPRPPVYDDGPAGPDAEEAGDETP) are disordered. Positions 179–188 (DAEEAGDETP) are enriched in acidic residues. The C-terminal inhibitory domain; interacts with PCSK1 stretch occupies residues 221–260 (AADHDVGSELPPEGVLGALLRVKRLETPAPQVPARRLLPP). Residue serine 228 is glycosylated (O-linked (GalNAc...) serine). The short motif at 239-244 (LLRVKR) is the Sufficient for inhibition of PCSK1 element. Threonine 247 carries an O-linked (GalNAc...) threonine glycan.

As to quaternary structure, interacts via the C-terminal inhibitory domain with PCSK1 66 kDa form. Post-translationally, proteolytically cleaved in the Golgi. In terms of processing, O-glycosylated with a core 1 or possibly core 8 glycan. As to expression, expressed in brain and pancreas.

The protein localises to the secreted. The protein resides in the golgi apparatus. It localises to the trans-Golgi network. May function in the control of the neuroendocrine secretory pathway. Proposed be a specific endogenous inhibitor of PCSK1. ProSAAS and Big PEN-LEN, both containing the C-terminal inhibitory domain, but not the further processed peptides reduce PCSK1 activity in the endoplasmic reticulum and Golgi. It reduces the activity of the 84 kDa form but not the autocatalytically derived 66 kDa form of PCSK1. Subsequent processing of proSAAS may eliminate the inhibition. Slows down convertase-mediated processing of proopiomelanocortin and proenkephalin. May control the intracellular timing of PCSK1 rather than its total level of activity. Its function is as follows. Endogenous ligand for GPR171. Neuropeptide involved in the regulation of feeding. The polypeptide is ProSAAS (PCSK1N) (Homo sapiens (Human)).